A 38-amino-acid polypeptide reads, in one-letter code: Photosystem I reaction center subunit IX (38 aa).

A helical transmembrane segment spans residues 4-24 (FLTTAPVFSAIWFTLTAGIMI).

Belongs to the PsaJ family.

It localises to the plastid. It is found in the organellar chromatophore thylakoid membrane. Functionally, may help in the organization of the PsaE and PsaF subunits. This is Photosystem I reaction center subunit IX from Paulinella chromatophora.